A 156-amino-acid chain; its full sequence is RNA polymerase sigma factor SigS (156 aa).

Positions 29–44 (EYYQLLLIKMWQLSQI) match the Polymerase core binding motif. The H-T-H motif DNA-binding region spans 126-145 (QFEIAEIMSLSLSTIKLIKM).

The protein belongs to the sigma-70 factor family.

Its function is as follows. Sigma factors are initiation factors that promote the attachment of RNA polymerase to specific initiation sites and are then released. Sigma-S contributes to the protection against external stress, thus playing a role in cellular fitness and survival. This chain is RNA polymerase sigma factor SigS (sigS), found in Staphylococcus aureus (strain NCTC 8325 / PS 47).